The following is a 162-amino-acid chain: NADPH-dependent 7-cyano-7-deazaguanine reductase (162 aa).

Cysteine 53 serves as the catalytic Thioimide intermediate. Aspartate 60 serves as the catalytic Proton donor. Residues 75 to 77 (VES) and 94 to 95 (HE) contribute to the substrate site.

The protein belongs to the GTP cyclohydrolase I family. QueF type 1 subfamily.

The protein localises to the cytoplasm. The enzyme catalyses 7-aminomethyl-7-carbaguanine + 2 NADP(+) = 7-cyano-7-deazaguanine + 2 NADPH + 3 H(+). It participates in tRNA modification; tRNA-queuosine biosynthesis. Functionally, catalyzes the NADPH-dependent reduction of 7-cyano-7-deazaguanine (preQ0) to 7-aminomethyl-7-deazaguanine (preQ1). The chain is NADPH-dependent 7-cyano-7-deazaguanine reductase from Streptococcus mutans serotype c (strain ATCC 700610 / UA159).